The sequence spans 134 residues: Kinetochore-binding protein 3 (134 aa).

It is found in the nucleus. The protein localises to the chromosome. Its subcellular location is the centromere. The protein resides in the kinetochore. This is Kinetochore-binding protein 3 (kbp-3) from Caenorhabditis elegans.